The chain runs to 563 residues: Putative GMC-type oxidoreductase L128 (563 aa).

Positions 1 to 21 (MTSSIVLKFFLIATLLVIANS) are cleaved as a signal peptide. Position 48–77 (48–77 (DYVIVGGGAAGSVLLDKCISYGYKCTLIER)) interacts with FAD. The active-site Proton acceptor is the His-504.

It belongs to the GMC oxidoreductase family. It depends on FAD as a cofactor.

This chain is Putative GMC-type oxidoreductase L128, found in Acanthamoeba polyphaga mimivirus (APMV).